Reading from the N-terminus, the 297-residue chain is Phosphatidylinositol N-acetylglucosaminyltransferase subunit C (297 aa).

4 helical membrane passes run 67 to 87 (VFVV…WLFG), 88 to 108 (TGLA…GGDG), 153 to 173 (AVFM…AAIV), and 239 to 259 (AFGG…LLLF).

It belongs to the PIGC family. In terms of assembly, component of the glycosylphosphatidylinositol-N-acetylglucosaminyltransferase (GPI-GnT) complex composed at least by PIGA, PIGC, PIGH, PIGP, PIGQ, PIGY and DPM2. Interacts with PIGQ. Interacts with the heterodimer PIGA:PIGH.

The protein localises to the endoplasmic reticulum membrane. It functions in the pathway glycolipid biosynthesis; glycosylphosphatidylinositol-anchor biosynthesis. Functionally, part of the glycosylphosphatidylinositol-N-acetylglucosaminyltransferase (GPI-GnT) complex that catalyzes the transfer of N-acetylglucosamine from UDP-N-acetylglucosamine to phosphatidylinositol and participates in the first step of GPI biosynthesis. The polypeptide is Phosphatidylinositol N-acetylglucosaminyltransferase subunit C (Mus musculus (Mouse)).